Here is an 82-residue protein sequence, read N- to C-terminus: M-theraphotoxin-Gr1a (82 aa).

Positions 1–21 (MKTSVVFVIAGLALLSVVCYA) are cleaved as a signal peptide. A propeptide spanning residues 22 to 46 (SELKEQSSVNEVLSTIFHFEQPEER) is cleaved from the precursor. 3 cysteine pairs are disulfide-bonded: C48/C63, C55/C69, and C62/C76. Phenylalanine amide is present on F80.

The protein belongs to the neurotoxin 10 (Hwtx-1) family. 52 (MTx4) subfamily. As to expression, expressed by the venom gland.

The protein resides in the secreted. Functionally, this cationic hydrophobic peptide acts on a lot of different channels and has an antimicrobial activity. It blocks mechanosensitive ion channels (also named stretch-activated channels or SACs), without having effect on whole-cell voltage-sensitive currents. It also affects acetylcholine receptors (nAChRs) through interactions with membrane lipids by prolonging the closing time without affecting channel conductance or opening activity. It shows high affinity for lipid bilayers. It acts by partitioning into the membrane and perturbing the interface between the channel and the lipid bilayer without necessarily being in physical contact with the channel. It inhibits atrial fibrillation as well as the membrane motor of outer hair cells at low doses. It also binds to the voltage sensor of voltage-gated potassium channels from the archaebacterium Aeropyrum pernix (KvAP) without affecting channel gating. It also shows a low inhibition on a large spectra of sodium channels (Nav1.1/SCN1A, Nav1.2/SCN2A, Nav1.3/SCN3A, Nav1.4/SCN4A, Nav1.5/SCN5A, Nav1.6/SCN8A, Nav1.7/SCN9A) (IC(50)=7.4-14 uM), and potassium channels Kv11.1/KCNH2 and Kv11.2/KCNH6 (IC(50)=11 uM for both). It exhibits antimicrobial activities against the Gram-positive bacteria B.subtilis (MIC=0.5 uM), S.aureus (MIC=2-4 uM), and S.epidermidis (MIC=4-8 uM), and Gram-negative bacteria S.typhimurium (MIC=32.64 uM), P.aeruginosa (MIC=8-16 uM), and E.coli (MIC=8-16 uM). The protein is M-theraphotoxin-Gr1a of Grammostola rosea (Chilean rose tarantula).